A 505-amino-acid chain; its full sequence is 2,3-bisphosphoglycerate-independent phosphoglycerate mutase (505 aa).

D12 and S62 together coordinate Mn(2+). S62 serves as the catalytic Phosphoserine intermediate. Residues H123, 153–154 (RD), R185, R191, 257–260 (RPDR), and K330 each bind substrate. 5 residues coordinate Mn(2+): D397, H401, D438, H439, and H456.

The protein belongs to the BPG-independent phosphoglycerate mutase family. In terms of assembly, monomer. It depends on Mn(2+) as a cofactor.

It catalyses the reaction (2R)-2-phosphoglycerate = (2R)-3-phosphoglycerate. Its pathway is carbohydrate degradation; glycolysis; pyruvate from D-glyceraldehyde 3-phosphate: step 3/5. Catalyzes the interconversion of 2-phosphoglycerate and 3-phosphoglycerate. This is 2,3-bisphosphoglycerate-independent phosphoglycerate mutase from Staphylococcus aureus (strain COL).